The primary structure comprises 553 residues: Phosphoglucomutase (553 aa).

The tract at residues 1 to 24 is disordered; that stretch reads MQATVKRYPTTPISGQTMGTSGLR. Over residues 11 to 20 the composition is skewed to polar residues; the sequence is TPISGQTMGT. Substrate contacts are provided by residues Thr20, Arg24, 117-118, and Lys131; that span reads SH. Ser117 (phosphoserine intermediate) is an active-site residue. Ser117 is a Mg(2+) binding site. The Mg(2+) site is built by Asp289, Asp291, and Asp293. Substrate is bound by residues 293–294, Thr352, 371–373, Lys384, and Arg509; these read DR and EES.

Belongs to the phosphohexose mutase family. Requires Mg(2+) as cofactor.

It localises to the cytoplasm. The catalysed reaction is alpha-D-glucose 1-phosphate = alpha-D-glucose 6-phosphate. This enzyme participates in both the breakdown and synthesis of glucose. This Entamoeba dispar protein is Phosphoglucomutase (pgm).